An 85-amino-acid chain; its full sequence is Phycobilisome 9.7 kDa linker polypeptide, phycocyanin-associated, rod (85 aa).

One can recognise a CpcD-like domain in the interval 16-74 (NRVFVYEVEGLRQNEQTDNNRYQIRNSSTIEIQVPYSRMNEEDRRITRLGGRIVNIRPA).

It belongs to the phycobilisome linker protein family.

It localises to the cellular thylakoid membrane. Its function is as follows. Rod linker protein, associated with phycocyanin. Linker polypeptides determine the state of aggregation and the location of the disk-shaped phycobiliprotein units within the phycobilisome and modulate their spectroscopic properties in order to mediate a directed and optimal energy transfer. In Microchaete diplosiphon (Fremyella diplosiphon), this protein is Phycobilisome 9.7 kDa linker polypeptide, phycocyanin-associated, rod (cpcD2).